Reading from the N-terminus, the 541-residue chain is Coiled-coil domain-containing protein 116 (541 aa).

Positions 79 to 102 (QVLDSLQTVVEQATERLAAMKTEA) form a coiled coil. A disordered region spans residues 346 to 397 (LPGNSDLLQPSSKASIPTNREARGEPCDSLTTAYSPKTSHRKSKGRRGSPPN). A compositionally biased stretch (polar residues) spans 351 to 363 (DLLQPSSKASIPT). Residues 383-392 (TSHRKSKGRR) show a composition bias toward basic residues. The residue at position 394 (Ser394) is a Phosphoserine.

The protein resides in the cytoplasm. It localises to the cytoskeleton. It is found in the microtubule organizing center. Its subcellular location is the centrosome. The chain is Coiled-coil domain-containing protein 116 (Ccdc116) from Mus musculus (Mouse).